Consider the following 78-residue polypeptide: uncharacterized protein (78 aa).

Positions 1-22 (MFKKSVLFATLLSGVMAFSTNA) are cleaved as a signal peptide.

This sequence belongs to the BhsA/McbA family.

It localises to the periplasm. Functionally, probably involved in reactive chlorine species (RCS) stress resistance. This is an uncharacterized protein from Escherichia coli (strain K12).